Reading from the N-terminus, the 86-residue chain is Large ribosomal subunit protein bL27 (86 aa).

The span at 1–10 (MAQKKGGGST) shows a compositional bias: gly residues. The tract at residues 1-21 (MAQKKGGGSTRNGRDSESKRL) is disordered.

Belongs to the bacterial ribosomal protein bL27 family.

In Cupriavidus necator (strain ATCC 17699 / DSM 428 / KCTC 22496 / NCIMB 10442 / H16 / Stanier 337) (Ralstonia eutropha), this protein is Large ribosomal subunit protein bL27.